Consider the following 634-residue polypeptide: Chaperone protein HtpG (634 aa).

The tract at residues 1–342 is a; substrate-binding; it reads MSVETQKETL…SNDLSLNVSR (342 aa). The b stretch occupies residues 343–559; that stretch reads EILQKDPVID…EQDLGLQMRQ (217 aa). A c region spans residues 560-634; sequence ILEASGQKVP…LNKLLVELSA (75 aa).

Belongs to the heat shock protein 90 family. Homodimer.

The protein resides in the cytoplasm. Its function is as follows. Molecular chaperone. Has ATPase activity. The chain is Chaperone protein HtpG from Pseudomonas paraeruginosa (strain DSM 24068 / PA7) (Pseudomonas aeruginosa (strain PA7)).